The sequence spans 341 residues: GTPase Obg (341 aa).

One can recognise an Obg domain in the interval 1 to 159; the sequence is MKFLDQAKIY…RTIWLRLKLI (159 aa). The 168-residue stretch at 160–327 folds into the OBG-type G domain; that stretch reads ADAGLVGLPN…TLRQLARIID (168 aa). Residues 166-173, 191-195, 212-215, 279-282, and 308-310 each bind GTP; these read GLPNAGKS, FTTLH, DIPG, SQVD, and SAV. Mg(2+)-binding residues include S173 and T193.

The protein belongs to the TRAFAC class OBG-HflX-like GTPase superfamily. OBG GTPase family. Monomer. It depends on Mg(2+) as a cofactor.

It is found in the cytoplasm. Functionally, an essential GTPase which binds GTP, GDP and possibly (p)ppGpp with moderate affinity, with high nucleotide exchange rates and a fairly low GTP hydrolysis rate. Plays a role in control of the cell cycle, stress response, ribosome biogenesis and in those bacteria that undergo differentiation, in morphogenesis control. This is GTPase Obg from Brucella abortus biovar 1 (strain 9-941).